The primary structure comprises 253 residues: Imidazole glycerol phosphate synthase subunit HisF (253 aa).

Residues Asp-11 and Asp-130 contribute to the active site.

Belongs to the HisA/HisF family. In terms of assembly, heterodimer of HisH and HisF.

The protein localises to the cytoplasm. The enzyme catalyses 5-[(5-phospho-1-deoxy-D-ribulos-1-ylimino)methylamino]-1-(5-phospho-beta-D-ribosyl)imidazole-4-carboxamide + L-glutamine = D-erythro-1-(imidazol-4-yl)glycerol 3-phosphate + 5-amino-1-(5-phospho-beta-D-ribosyl)imidazole-4-carboxamide + L-glutamate + H(+). Its pathway is amino-acid biosynthesis; L-histidine biosynthesis; L-histidine from 5-phospho-alpha-D-ribose 1-diphosphate: step 5/9. IGPS catalyzes the conversion of PRFAR and glutamine to IGP, AICAR and glutamate. The HisF subunit catalyzes the cyclization activity that produces IGP and AICAR from PRFAR using the ammonia provided by the HisH subunit. The protein is Imidazole glycerol phosphate synthase subunit HisF of Acidobacterium capsulatum (strain ATCC 51196 / DSM 11244 / BCRC 80197 / JCM 7670 / NBRC 15755 / NCIMB 13165 / 161).